We begin with the raw amino-acid sequence, 513 residues long: MSEQNQTPDAELDVQEFNNEMTQRRAKLAELRTKGNPFPNDFRRDQISNELHAAFDDKSQDELAAEKHYVKIAGRIMTRRIMGKASFATLQDMGGKIQIYVTRDDLPEGFYNEQFKKWDLGDIVGVEGYMFRTNTGELSVHTTSIRLLTKALRPLPEKHKGLTDQEARCRQRYLDLIANEESRRTFQIRNQVMNGIRNFLNSKNFMEVETPMMQVIPGGASARPFVTHHNALDIDMYLRIAPELYLKRLVVGGFERVYEVNRNFRNEGISVRHNPEFTMLEFYMAYADYNDLMDLTEEMLRTLAQNIHGTTKIRYAKDGEEGIEIDFGQPFARMTMVESILKYGNDVKAEELTTLEGAIAVAKRHHVELMKSWELGHVITAIFEETAEHMLHQPTFITEYPAAVSPLARRNDDNPEVTDRFEFFIGGREIANGFSELNDAEDQAERFQAQVAQKEAGDDEAMFYDADFVTALEHGLPPTAGQGIGIDRLVMLFTNSHTIRDVILFPALRPSNK.

Mg(2+)-binding residues include Glu422 and Glu429.

The protein belongs to the class-II aminoacyl-tRNA synthetase family. In terms of assembly, homodimer. It depends on Mg(2+) as a cofactor.

Its subcellular location is the cytoplasm. The catalysed reaction is tRNA(Lys) + L-lysine + ATP = L-lysyl-tRNA(Lys) + AMP + diphosphate. This Tolumonas auensis (strain DSM 9187 / NBRC 110442 / TA 4) protein is Lysine--tRNA ligase.